We begin with the raw amino-acid sequence, 124 residues long: Large ribosomal subunit protein bL12 (124 aa).

Belongs to the bacterial ribosomal protein bL12 family. Homodimer. Part of the ribosomal stalk of the 50S ribosomal subunit. Forms a multimeric L10(L12)X complex, where L10 forms an elongated spine to which 2 to 4 L12 dimers bind in a sequential fashion. Binds GTP-bound translation factors.

Its function is as follows. Forms part of the ribosomal stalk which helps the ribosome interact with GTP-bound translation factors. Is thus essential for accurate translation. This chain is Large ribosomal subunit protein bL12, found in Nautilia profundicola (strain ATCC BAA-1463 / DSM 18972 / AmH).